We begin with the raw amino-acid sequence, 416 residues long: Squalene synthase (416 aa).

The next 2 helical transmembrane spans lie at 285–304 (VINF…NACY) and 386–406 (FISY…FLIA).

The protein belongs to the phytoene/squalene synthase family. The cofactor is Mg(2+).

Its subcellular location is the endoplasmic reticulum membrane. It carries out the reaction 2 (2E,6E)-farnesyl diphosphate + NADPH + H(+) = squalene + 2 diphosphate + NADP(+). The enzyme catalyses 2 (2E,6E)-farnesyl diphosphate + NADH + H(+) = squalene + 2 diphosphate + NAD(+). The protein operates within terpene metabolism; lanosterol biosynthesis; lanosterol from farnesyl diphosphate: step 1/3. The sequence is that of Squalene synthase (fdfT) from Dictyostelium discoideum (Social amoeba).